A 256-amino-acid chain; its full sequence is Pimeloyl-[acyl-carrier protein] methyl ester esterase (256 aa).

In terms of domain architecture, AB hydrolase-1 spans 15 to 242 (HLVLLHGWGL…AAHAPFISHP (228 aa)). Substrate is bound by residues W22, 82–83 (SL), and 143–147 (FLALQ). The Nucleophile role is filled by S82. Residues D207 and H235 contribute to the active site. Residue H235 coordinates substrate.

It belongs to the AB hydrolase superfamily. Carboxylesterase BioH family. Monomer.

Its subcellular location is the cytoplasm. The enzyme catalyses 6-carboxyhexanoyl-[ACP] methyl ester + H2O = 6-carboxyhexanoyl-[ACP] + methanol + H(+). It participates in cofactor biosynthesis; biotin biosynthesis. Functionally, the physiological role of BioH is to remove the methyl group introduced by BioC when the pimeloyl moiety is complete. It allows to synthesize pimeloyl-ACP via the fatty acid synthetic pathway through the hydrolysis of the ester bonds of pimeloyl-ACP esters. The sequence is that of Pimeloyl-[acyl-carrier protein] methyl ester esterase from Escherichia coli O157:H7.